The following is a 329-amino-acid chain: MNNHLILGVETSCDETSVAIVSEEGEVCFHEIFTQDHSKYNGVYPEFASREHLKILPQILRRAVQAHDLEKLTAIACTVGPGLVGSLIVGVMMARGLAFSLKKPVFGVNHLEGHLLAVRLVEKINFPFVCLVISGGHSQLIDARGIGDYVLLGETLDDAFGEAFDKLATMLGFTYPGGKTVEKLAIKGDSERFRLPAAMINQSGCNFSLSGIKTALKKIITSLPQITEKDKADICASFQACVARIMVNKLEQAVKICGHSRIVLAGGVGSNRYIRETLEEFAKNHNLSLHFPEGILCTDNAAMIAWAAIERLKAGCTELSLEPQPRLCW.

The Fe cation site is built by His110 and His114. Substrate-binding positions include 132-136 (VISGG), Asp165, Gly178, and Asn271. Fe cation is bound at residue Asp299.

The protein belongs to the KAE1 / TsaD family. It depends on Fe(2+) as a cofactor.

It is found in the cytoplasm. The enzyme catalyses L-threonylcarbamoyladenylate + adenosine(37) in tRNA = N(6)-L-threonylcarbamoyladenosine(37) in tRNA + AMP + H(+). Required for the formation of a threonylcarbamoyl group on adenosine at position 37 (t(6)A37) in tRNAs that read codons beginning with adenine. Is involved in the transfer of the threonylcarbamoyl moiety of threonylcarbamoyl-AMP (TC-AMP) to the N6 group of A37, together with TsaE and TsaB. TsaD likely plays a direct catalytic role in this reaction. In Neorickettsia sennetsu (strain ATCC VR-367 / Miyayama) (Ehrlichia sennetsu), this protein is tRNA N6-adenosine threonylcarbamoyltransferase.